The following is a 638-amino-acid chain: Exotoxin A (638 aa).

A signal peptide spans 1 to 25 (MHLTPHWIPLVASLGLLAGGSFASA). Positions 26–277 (AEEAFDLWNE…VISHRLHFPE (252 aa)) are domain Ia (required for target cell recognition). Residues 278–389 (GGSLAALTAH…TGNDEAGAAS (112 aa)) are II (required for translocation in target cell cytoplasm). An intrachain disulfide couples C290 to C312. Positions 390–429 (ADVVSLTCPVAAGECAGPADSGDALLERNYPTGAEFLGDG) are domain Ib. Residues 430-638 (GDISFSTRGT…PGKPPREDLK (209 aa)) form an III (required for ADP-ribosyl activity) region. Residues 465–467 (HGT), S474, 479–485 (GVRARSQ), and E578 contribute to the NAD(+) site. E578 is an active-site residue. Residues 596 to 638 (IPTDPRNVGGDLDPSSIPDKEQAISALPDYASQPGKPPREDLK) form a disordered region.

The 8 cysteines participate in intrachain disulfide bonds.

The catalysed reaction is diphthamide-[translation elongation factor 2] + NAD(+) = N-(ADP-D-ribosyl)diphthamide-[translation elongation factor 2] + nicotinamide + H(+). With respect to regulation, inhibited by 1,8-naphthalimide (NAP) as well as a number of poly(ADP-ribose) polymerase inhibitors and other compounds. An NAD-dependent ADP-ribosyltransferase (ADPRT). Catalyzes the transfer of the ADP ribosyl moiety of oxidized NAD (NAD(+)) onto eukaryotic elongation factor 2 (eEF-2) thus arresting protein synthesis. Has an LD(50) of 65 ng/ml against the human lung epithelial cell line C38. The chain is Exotoxin A from Pseudomonas aeruginosa (strain ATCC 15692 / DSM 22644 / CIP 104116 / JCM 14847 / LMG 12228 / 1C / PRS 101 / PAO1).